The sequence spans 213 residues: Protein-L-isoaspartate O-methyltransferase (213 aa).

The active site involves Ser64.

The protein belongs to the methyltransferase superfamily. L-isoaspartyl/D-aspartyl protein methyltransferase family.

Its subcellular location is the cytoplasm. The enzyme catalyses [protein]-L-isoaspartate + S-adenosyl-L-methionine = [protein]-L-isoaspartate alpha-methyl ester + S-adenosyl-L-homocysteine. Its function is as follows. Catalyzes the methyl esterification of L-isoaspartyl residues in peptides and proteins that result from spontaneous decomposition of normal L-aspartyl and L-asparaginyl residues. It plays a role in the repair and/or degradation of damaged proteins. This Flavobacterium psychrophilum (strain ATCC 49511 / DSM 21280 / CIP 103535 / JIP02/86) protein is Protein-L-isoaspartate O-methyltransferase.